The chain runs to 509 residues: UDP-N-acetylmuramyl-tripeptide synthetase (509 aa).

Residue G124–S130 coordinates ATP. UDP-N-acetyl-alpha-D-muramoyl-L-alanyl-D-glutamate contacts are provided by residues T164–T165, S191, and R199. Position 231 is an N6-carboxylysine (K231).

Belongs to the MurCDEF family. MurE subfamily. In terms of processing, carboxylation is probably crucial for Mg(2+) binding and, consequently, for the gamma-phosphate positioning of ATP.

Its subcellular location is the cytoplasm. The protein operates within cell wall biogenesis; peptidoglycan biosynthesis. In terms of biological role, catalyzes the addition of an amino acid to the nucleotide precursor UDP-N-acetylmuramoyl-L-alanyl-D-glutamate (UMAG) in the biosynthesis of bacterial cell-wall peptidoglycan. This is UDP-N-acetylmuramyl-tripeptide synthetase from Tropheryma whipplei (strain TW08/27) (Whipple's bacillus).